Reading from the N-terminus, the 96-residue chain is DNA-directed RNA polymerase subunit Rpo11 (96 aa).

This sequence belongs to the archaeal Rpo11/eukaryotic RPB11/RPC19 RNA polymerase subunit family. Part of the RNA polymerase complex.

The protein localises to the cytoplasm. It carries out the reaction RNA(n) + a ribonucleoside 5'-triphosphate = RNA(n+1) + diphosphate. DNA-dependent RNA polymerase (RNAP) catalyzes the transcription of DNA into RNA using the four ribonucleoside triphosphates as substrates. In Methanococcus maripaludis (strain DSM 14266 / JCM 13030 / NBRC 101832 / S2 / LL), this protein is DNA-directed RNA polymerase subunit Rpo11.